A 252-amino-acid chain; its full sequence is Probable transcriptional regulatory protein RT0442 (252 aa).

The disordered stretch occupies residues 1–22 (MSGHSKFKNIQHRKGAQDKKKS).

This sequence belongs to the TACO1 family.

It localises to the cytoplasm. This is Probable transcriptional regulatory protein RT0442 from Rickettsia typhi (strain ATCC VR-144 / Wilmington).